A 217-amino-acid polypeptide reads, in one-letter code: TPA-induced transmembrane protein (217 aa).

Positions 1 to 37 (MDLAQPSQPVDELELSVLERQPEENTPLNGADKVFPS) are disordered. Residues 66–86 (LWMIITSIFLGVITVIIIGLC) form a helical membrane-spanning segment.

In terms of assembly, interacts with LIPH. As to expression, detected predominantly in the skin, with strongest expression in the inner root sheath of the hair follicle.

It is found in the endoplasmic reticulum. The protein resides in the cell membrane. Functionally, has a role in LIPH-mediated synthesis of 2-acyl lysophosphatidic acid (LPA). LPA is a bioactive lipid mediator involved in different biological processes, and necessary to promote hair formation and growth. This Homo sapiens (Human) protein is TPA-induced transmembrane protein (TTMP).